A 107-amino-acid polypeptide reads, in one-letter code: Glutaconyl-CoA decarboxylase subunit delta (107 aa).

Residues 10–32 (MINMTIVFGVLIVLGILMVLIHA) traverse the membrane as a helical segment. Residues 37-60 (KKVQGKKKPVVAKPAPSAAASKRQ) form a disordered region. The span at 47–57 (VAKPAPSAAAS) shows a compositional bias: low complexity.

Belongs to the OadG family. Heterooctamer consisting of two alpha, two beta, two gamma and two delta subunits.

The protein resides in the cell membrane. It carries out the reaction (2E)-glutaconyl-CoA + Na(+)(in) + H(+) = (2E)-butenoyl-CoA + Na(+)(out) + CO2. It participates in amino-acid degradation; L-glutamate degradation via hydroxyglutarate pathway; crotonoyl-CoA from L-glutamate: step 5/5. In terms of biological role, part of the primary sodium pump glutaconyl-CoA decarboxylase (GCD). Possible membrane anchor for the alpha subunit. This chain is Glutaconyl-CoA decarboxylase subunit delta (gcdD), found in Acidaminococcus fermentans (strain ATCC 25085 / DSM 20731 / CCUG 9996 / CIP 106432 / VR4).